Consider the following 81-residue polypeptide: MKPSGITFAFLVVFMMAIMYNSVQAAAIADADADAEAKAFADAFAEAGWGSIFKTVGKMIAKAAVKAAPEAISAMASQNEK.

A signal peptide spans 1–25; sequence MKPSGITFAFLVVFMMAIMYNSVQA. A propeptide spanning residues 26–47 is cleaved from the precursor; it reads AAIADADADAEAKAFADAFAEA.

It belongs to the formicidae venom precursor-01 superfamily. In terms of processing, truncated sequences of this peptide have also been found in the venom. It is possible they have been cleaved in the venom. As to expression, expressed by the venom gland.

The protein localises to the secreted. Its function is as follows. Cationic amphipathic alpha-helical peptide with antimicrobial activities against E.coli (MIC=6.2 uM), S.aureus (MIC=6.2 uM), and S.cerevisiae (MIC=50 uM). Also shows histamine-releasing activity (30.1% at 10 uM) and a weak hemolytic activity (10.4% at 50 uM). The chain is U-poneritoxin(01)-Om2a from Odontomachus monticola (Trap-jaw ant).